The chain runs to 280 residues: tRNA dimethylallyltransferase (280 aa).

9 to 16 (GPTGSGKT) is an ATP binding site. 11–16 (TGSGKT) is a substrate binding site. An interaction with substrate tRNA region spans residues 34–37 (DSVS).

Belongs to the IPP transferase family. In terms of assembly, monomer. Mg(2+) serves as cofactor.

It catalyses the reaction adenosine(37) in tRNA + dimethylallyl diphosphate = N(6)-dimethylallyladenosine(37) in tRNA + diphosphate. Catalyzes the transfer of a dimethylallyl group onto the adenine at position 37 in tRNAs that read codons beginning with uridine, leading to the formation of N6-(dimethylallyl)adenosine (i(6)A). In Acholeplasma laidlawii (strain PG-8A), this protein is tRNA dimethylallyltransferase.